The sequence spans 279 residues: tRNA (carboxymethyluridine(34)-5-O)-methyltransferase (279 aa).

Residues 172-236 (KSKSKPKTKS…QQQDQEQERE (65 aa)) form a disordered region. Positions 200–229 (PKERSEYLQRWKEEQQRSKSLDDNDEKQQQ) are enriched in basic and acidic residues.

Interacts with TRM112.

Its subcellular location is the cytoplasm. It is found in the nucleus. It carries out the reaction 5-(carboxymethyl)uridine(34) in tRNA + S-adenosyl-L-methionine = 5-(2-methoxy-2-oxoethyl)uridine(34) in tRNA + S-adenosyl-L-homocysteine. In terms of biological role, required for the methylation of the wobble bases at position 34 in tRNA. Appears to have a role in stress-response. The chain is tRNA (carboxymethyluridine(34)-5-O)-methyltransferase (TRM9) from Saccharomyces cerevisiae (strain ATCC 204508 / S288c) (Baker's yeast).